Here is a 114-residue protein sequence, read N- to C-terminus: C-X-C motif chemokine 5 (114 aa).

The first 36 residues, 1–36 (MSLLSSRAARVPGPSSSLCALLVLLLLLTQPGPIAS), serve as a signal peptide directing secretion. Cystine bridges form between cysteine 49-cysteine 75 and cysteine 51-cysteine 91.

It belongs to the intercrine alpha (chemokine CxC) family. Monomer. Homodimer. Post-translationally, N-terminal processed forms ENA-78(8-78) and ENA-78(9-78) are produced by proteolytic cleavage after secretion from peripheral blood monocytes.

It localises to the secreted. Functionally, involved in neutrophil activation. In vitro, ENA-78(8-78) and ENA-78(9-78) show a threefold higher chemotactic activity for neutrophil granulocytes. The polypeptide is C-X-C motif chemokine 5 (CXCL5) (Homo sapiens (Human)).